The chain runs to 453 residues: Exodeoxyribonuclease 7 large subunit (453 aa).

This sequence belongs to the XseA family. In terms of assembly, heterooligomer composed of large and small subunits.

The protein resides in the cytoplasm. The catalysed reaction is Exonucleolytic cleavage in either 5'- to 3'- or 3'- to 5'-direction to yield nucleoside 5'-phosphates.. In terms of biological role, bidirectionally degrades single-stranded DNA into large acid-insoluble oligonucleotides, which are then degraded further into small acid-soluble oligonucleotides. The polypeptide is Exodeoxyribonuclease 7 large subunit (Rickettsia typhi (strain ATCC VR-144 / Wilmington)).